The primary structure comprises 959 residues: Oxysterol-binding protein-related protein 6 (959 aa).

The disordered stretch occupies residues 1–60; the sequence is MSSDEKGISPAHKTSTPTHRSASSSTSSQRESRQSIHVLERTASSSTEPSVSRQLLEPEP. Ser-2 bears the N-acetylserine mark. Residues 14-29 are compositionally biased toward low complexity; sequence TSTPTHRSASSSTSSQ. Residues 30 to 40 are compositionally biased toward basic and acidic residues; it reads RESRQSIHVLE. Ser-35 is modified (phosphoserine). The span at 42-53 shows a compositional bias: polar residues; it reads TASSSTEPSVSR. In terms of domain architecture, PH spans 86–181; it reads PDRHEGFMLK…WVSKLRHHRL (96 aa). Phosphoserine is present on residues Ser-190 and Ser-290.

It belongs to the OSBP family. As to quaternary structure, homodimer. Interacts with OSBPL3. In terms of tissue distribution, expressed in skin, respiratory epithelium, small intestine epithelium, pancreas, striated muscle, brain, spinal ganglia, and nervous plexus of the intestine (at protein level). In the brain, specifically in the cerebellum, it is expressed in Purkinje and granule cells. Expressed in hepatocytes and macrophages.

It is found in the nucleus envelope. It localises to the cytoplasm. The protein localises to the cytosol. The protein resides in the endoplasmic reticulum membrane. Its subcellular location is the cell membrane. It is found in the endosome membrane. Regulates cellular transport and efflux of cholesterol. Plays a role in phosphatidylinositol-4-phophate (PI4P) turnover at the neuronal membrane. Binds via its PH domain PI4P, phosphatidylinositol-4,5-diphosphate, phosphatidylinositol-3,4,5-triphosphate, and phosphatidic acid. Weakly binds 25-hydroxycholesterol. The protein is Oxysterol-binding protein-related protein 6 (Osbpl6) of Mus musculus (Mouse).